The primary structure comprises 536 residues: Probable cytochrome P450 318a1 (536 aa).

Over residues 439–457 (EEEQLSKGHNDSGSGEKRR) the composition is skewed to basic and acidic residues. The segment at 439–460 (EEEQLSKGHNDSGSGEKRRQRD) is disordered. Cys477 serves as a coordination point for heme.

This sequence belongs to the cytochrome P450 family. Heme is required as a cofactor.

The protein resides in the endoplasmic reticulum membrane. It is found in the microsome membrane. Its function is as follows. May be involved in the metabolism of insect hormones and in the breakdown of synthetic insecticides. The polypeptide is Probable cytochrome P450 318a1 (Cyp318a1) (Drosophila melanogaster (Fruit fly)).